A 354-amino-acid polypeptide reads, in one-letter code: MGKLVALTVLGASLALLGERLLNFRERVSTSREIKPTEPQNCHLIEGLENGSEDIDILPSGLAFISTGLKYPGMPSFAPDKPGRIFLMDLNEPYPKAQALEISDGFDQDSLNPHGISTFIDKDNTVYLYAVNHPHMDSTVEIFKFEEQPRSLVHLKTIKHELFESVNDIVVLGPEQFYATRDHYFTSHFLVLLEMILDPHWTSVLFYSPKEVKVVAQGFSSANGITVSLDQKYVYVADVTAKNIHIMKKHNNWDLTPVKVIQLGTLVDNLTVDPATGDILAGCHPNPMKLLIYNPEDPPGSEVLRIQDPLSDNPRVSTLYSNNGSVLQGSTVASVYHKKMLIGTIFHKALYCEL.

Cys-42 and Cys-352 form a disulfide bridge. Asn-50 carries an N-linked (GlcNAc...) asparagine glycan. Ca(2+) contacts are provided by Glu-53 and Asp-54. His-114 serves as the catalytic Proton acceptor. Residue Ile-116 participates in Ca(2+) binding. Ser-165 bears the Phosphoserine mark. Ca(2+) contacts are provided by Asn-167, Asp-168, Asn-223, Asp-268, and Asn-269. 2 N-linked (GlcNAc...) asparagine glycosylation sites follow: Asn-269 and Asn-323.

The protein belongs to the paraoxonase family. Homodimer. It depends on Ca(2+) as a cofactor. Post-translationally, glycosylated. In terms of processing, the signal sequence is not cleaved.

It localises to the secreted. Its subcellular location is the extracellular space. It carries out the reaction a phenyl acetate + H2O = a phenol + acetate + H(+). The catalysed reaction is An aryl dialkyl phosphate + H2O = dialkyl phosphate + an aryl alcohol.. It catalyses the reaction an N-acyl-L-homoserine lactone + H2O = an N-acyl-L-homoserine + H(+). Functionally, has low activity towards the organophosphate paraxon and aromatic carboxylic acid esters. Rapidly hydrolyzes lactones such as statin prodrugs (e.g. lovastatin). Hydrolyzes aromatic lactones and 5- or 6-member ring lactones with aliphatic substituents but not simple lactones or those with polar substituents. The chain is Serum paraoxonase/lactonase 3 (Pon3) from Rattus norvegicus (Rat).